Reading from the N-terminus, the 138-residue chain is Cysteine desulfuration protein SufE (138 aa).

The active-site Cysteine persulfide intermediate is Cys-51.

It belongs to the SufE family. As to quaternary structure, homodimer. Interacts with SufS.

It is found in the cytoplasm. It functions in the pathway cofactor biosynthesis; iron-sulfur cluster biosynthesis. Its function is as follows. Participates in cysteine desulfuration mediated by SufS. Cysteine desulfuration mobilizes sulfur from L-cysteine to yield L-alanine and constitutes an essential step in sulfur metabolism for biosynthesis of a variety of sulfur-containing biomolecules. Functions as a sulfur acceptor for SufS, by mediating the direct transfer of the sulfur atom from the S-sulfanylcysteine of SufS, an intermediate product of cysteine desulfuration process. In Klebsiella pneumoniae (strain 342), this protein is Cysteine desulfuration protein SufE.